The sequence spans 464 residues: Argininosuccinate lyase (464 aa).

Belongs to the lyase 1 family. Argininosuccinate lyase subfamily.

The protein resides in the cytoplasm. The catalysed reaction is 2-(N(omega)-L-arginino)succinate = fumarate + L-arginine. It participates in amino-acid biosynthesis; L-arginine biosynthesis; L-arginine from L-ornithine and carbamoyl phosphate: step 3/3. This Koribacter versatilis (strain Ellin345) protein is Argininosuccinate lyase.